A 100-amino-acid polypeptide reads, in one-letter code: NADH-quinone oxidoreductase subunit K (100 aa).

3 consecutive transmembrane segments (helical) span residues 1–21 (MIGL…GLAG), 28–48 (ILLL…GFVA), and 64–84 (FIIA…ILWF).

This sequence belongs to the complex I subunit 4L family. As to quaternary structure, NDH-1 is composed of 14 different subunits. Subunits NuoA, H, J, K, L, M, N constitute the membrane sector of the complex.

Its subcellular location is the cell inner membrane. It catalyses the reaction a quinone + NADH + 5 H(+)(in) = a quinol + NAD(+) + 4 H(+)(out). Functionally, NDH-1 shuttles electrons from NADH, via FMN and iron-sulfur (Fe-S) centers, to quinones in the respiratory chain. The immediate electron acceptor for the enzyme in this species is believed to be ubiquinone. Couples the redox reaction to proton translocation (for every two electrons transferred, four hydrogen ions are translocated across the cytoplasmic membrane), and thus conserves the redox energy in a proton gradient. This is NADH-quinone oxidoreductase subunit K from Helicobacter pylori (strain Shi470).